We begin with the raw amino-acid sequence, 359 residues long: MAQQIQVDLGERSYPIYIGQSLMSDSETLSRYLLKKRILIVTNETVAPLYLKQVQDTMASFGEISSVILSDGEQFKDLTHLDSIFTALLQRNYGRDSVLVALGGGVIGDMTGFAAACYQRGIDFIQIPTTLLSQVDSSVGGKTAVNHPLGKNMIGAFYQPQIVIIDTECLQTLPAREFAAGMAEVIKYGIMWDADFFQWLENNVQALKSLDTQALVYAISRCCEIKADVVSQDETEQGVRALLNLGHTFGHAIEAEMGYGNWLHGEAVAAGTVLAAQTAKSLGLIDESIVCRIVQLLQAFDLPVKAPESMDFESFIQHMRRDKKVLGGQIRLVLPTAIGRAEVFSQVPESTLEQVICCA.

NAD(+)-binding positions include 71–76, 105–109, 129–130, Lys-142, Lys-151, and 169–172; these read DGEQFK, GVIGD, TT, and CLQT. 3 residues coordinate Zn(2+): Glu-184, His-247, and His-264.

It belongs to the sugar phosphate cyclases superfamily. Dehydroquinate synthase family. NAD(+) serves as cofactor. Co(2+) is required as a cofactor. It depends on Zn(2+) as a cofactor.

It localises to the cytoplasm. It catalyses the reaction 7-phospho-2-dehydro-3-deoxy-D-arabino-heptonate = 3-dehydroquinate + phosphate. It functions in the pathway metabolic intermediate biosynthesis; chorismate biosynthesis; chorismate from D-erythrose 4-phosphate and phosphoenolpyruvate: step 2/7. In terms of biological role, catalyzes the conversion of 3-deoxy-D-arabino-heptulosonate 7-phosphate (DAHP) to dehydroquinate (DHQ). The chain is 3-dehydroquinate synthase from Shewanella oneidensis (strain ATCC 700550 / JCM 31522 / CIP 106686 / LMG 19005 / NCIMB 14063 / MR-1).